We begin with the raw amino-acid sequence, 189 residues long: NADH-quinone oxidoreductase subunit B (189 aa).

[4Fe-4S] cluster-binding residues include cysteine 39, cysteine 40, cysteine 104, and cysteine 135.

This sequence belongs to the complex I 20 kDa subunit family. NDH-1 is composed of 14 different subunits. Subunits NuoB, C, D, E, F, and G constitute the peripheral sector of the complex. Requires [4Fe-4S] cluster as cofactor.

Its subcellular location is the cell inner membrane. The catalysed reaction is a quinone + NADH + 5 H(+)(in) = a quinol + NAD(+) + 4 H(+)(out). Its function is as follows. NDH-1 shuttles electrons from NADH, via FMN and iron-sulfur (Fe-S) centers, to quinones in the respiratory chain. The immediate electron acceptor for the enzyme in this species is believed to be a menaquinone. Couples the redox reaction to proton translocation (for every two electrons transferred, four hydrogen ions are translocated across the cytoplasmic membrane), and thus conserves the redox energy in a proton gradient. This Pelodictyon phaeoclathratiforme (strain DSM 5477 / BU-1) protein is NADH-quinone oxidoreductase subunit B.